The chain runs to 565 residues: Proline--tRNA ligase (565 aa).

The protein belongs to the class-II aminoacyl-tRNA synthetase family. ProS type 1 subfamily. As to quaternary structure, homodimer.

The protein localises to the cytoplasm. It carries out the reaction tRNA(Pro) + L-proline + ATP = L-prolyl-tRNA(Pro) + AMP + diphosphate. Catalyzes the attachment of proline to tRNA(Pro) in a two-step reaction: proline is first activated by ATP to form Pro-AMP and then transferred to the acceptor end of tRNA(Pro). As ProRS can inadvertently accommodate and process non-cognate amino acids such as alanine and cysteine, to avoid such errors it has two additional distinct editing activities against alanine. One activity is designated as 'pretransfer' editing and involves the tRNA(Pro)-independent hydrolysis of activated Ala-AMP. The other activity is designated 'posttransfer' editing and involves deacylation of mischarged Ala-tRNA(Pro). The misacylated Cys-tRNA(Pro) is not edited by ProRS. The polypeptide is Proline--tRNA ligase (Francisella tularensis subsp. mediasiatica (strain FSC147)).